A 268-amino-acid chain; its full sequence is Energy-coupling factor transporter transmembrane protein EcfT (268 aa).

The next 5 helical transmembrane spans lie at 29-49 (VFIF…TVAV), 75-95 (IIIV…EVIV), 107-127 (LIEG…ASLL), 152-172 (LPTH…PTLI), and 242-262 (WGLK…AVMA).

This sequence belongs to the energy-coupling factor EcfT family. As to quaternary structure, forms a stable energy-coupling factor (ECF) transporter complex composed of 2 membrane-embedded substrate-binding proteins (S component), 2 ATP-binding proteins (A component) and 2 transmembrane proteins (T component). May be able to interact with more than 1 S component at a time.

It localises to the cell membrane. In terms of biological role, transmembrane (T) component of an energy-coupling factor (ECF) ABC-transporter complex. Unlike classic ABC transporters this ECF transporter provides the energy necessary to transport a number of different substrates. The protein is Energy-coupling factor transporter transmembrane protein EcfT of Bacillus selenitireducens (strain ATCC 700615 / DSM 15326 / MLS10).